The sequence spans 479 residues: Ribosomal RNA small subunit methyltransferase F (479 aa).

S-adenosyl-L-methionine is bound by residues 125–131 (AAAPGSK), E149, D176, and D194. The Nucleophile role is filled by C247.

It belongs to the class I-like SAM-binding methyltransferase superfamily. RsmB/NOP family.

Its subcellular location is the cytoplasm. The enzyme catalyses cytidine(1407) in 16S rRNA + S-adenosyl-L-methionine = 5-methylcytidine(1407) in 16S rRNA + S-adenosyl-L-homocysteine + H(+). Functionally, specifically methylates the cytosine at position 1407 (m5C1407) of 16S rRNA. This Escherichia coli O139:H28 (strain E24377A / ETEC) protein is Ribosomal RNA small subunit methyltransferase F.